A 101-amino-acid polypeptide reads, in one-letter code: Aspartyl/glutamyl-tRNA(Asn/Gln) amidotransferase subunit C (101 aa).

This sequence belongs to the GatC family. In terms of assembly, heterotrimer of A, B and C subunits.

It catalyses the reaction L-glutamyl-tRNA(Gln) + L-glutamine + ATP + H2O = L-glutaminyl-tRNA(Gln) + L-glutamate + ADP + phosphate + H(+). It carries out the reaction L-aspartyl-tRNA(Asn) + L-glutamine + ATP + H2O = L-asparaginyl-tRNA(Asn) + L-glutamate + ADP + phosphate + 2 H(+). Allows the formation of correctly charged Asn-tRNA(Asn) or Gln-tRNA(Gln) through the transamidation of misacylated Asp-tRNA(Asn) or Glu-tRNA(Gln) in organisms which lack either or both of asparaginyl-tRNA or glutaminyl-tRNA synthetases. The reaction takes place in the presence of glutamine and ATP through an activated phospho-Asp-tRNA(Asn) or phospho-Glu-tRNA(Gln). The protein is Aspartyl/glutamyl-tRNA(Asn/Gln) amidotransferase subunit C of Salinispora tropica (strain ATCC BAA-916 / DSM 44818 / JCM 13857 / NBRC 105044 / CNB-440).